We begin with the raw amino-acid sequence, 191 residues long: CASP-like protein 1D1 (191 aa).

Residues 1-22 (MTSTSKDTPESGYAVPPPNLFG) are Cytoplasmic-facing. Residues 23–43 (VDFGLRLLLLASAVSALVVLV) form a helical membrane-spanning segment. Over 44 to 73 (TSKQTESIPTSLPPPFPAFISRDAKFQHSP) the chain is Extracellular. The chain crosses the membrane as a helical span at residues 74 to 94 (AFIYLLVALSVTCFYSIITMV). Over 95–118 (ASFAAITSPSSSPRMLFHLVLSDA) the chain is Cytoplasmic. A helical transmembrane segment spans residues 119–139 (VMAGVMASAAGTAGSVAYLGL). Over 140–160 (KGNSHVNWNKVCNVYDKFCRH) the chain is Extracellular. The helical transmembrane segment at 161–181 (VGSSAAVSLVASVLLVSLVVL) threads the bilayer. Residues 182-191 (SSYSLYRRCR) are Cytoplasmic-facing.

The protein belongs to the Casparian strip membrane proteins (CASP) family. As to quaternary structure, homodimer and heterodimers.

The protein resides in the cell membrane. This chain is CASP-like protein 1D1, found in Musa acuminata (Banana).